The primary structure comprises 189 residues: Lutzicidin (189 aa).

Positions 1–22 (MQGFFWKTLLVVALCGTSSSLA) are cleaved as a signal peptide. The propeptide occupies 23-155 (HRPLSYGEAL…DEEKDRPKRV (133 aa)). 2 disulfide bridges follow: Cys-79–Cys-90 and Cys-101–Cys-118. Residues 125-148 (EEEEEDEEEQKAEVEKDEEKEDEE) show a composition bias toward acidic residues. The tract at residues 125–152 (EEEEEDEEEQKAEVEKDEEKEDEEKDRP) is disordered.

The protein belongs to the cathelicidin family. Expressed by the venom gland.

Its subcellular location is the secreted. It is found in the target cell membrane. Potent antimicrobial peptide against Gram-negative and Gram-positive bacteria. Adopts an amphipathic alpha helical conformation, that may allow to partition into the target membrane. Low hemolytic activities have been observed on mammalian cells. The protein is Lutzicidin of Bothrops lutzi (Sertao lancehead).